We begin with the raw amino-acid sequence, 311 residues long: HPr kinase/phosphorylase (311 aa).

Catalysis depends on residues histidine 138 and lysine 159. Position 153-160 (153-160) interacts with ATP; it reads GDSGIGKS. A Mg(2+)-binding site is contributed by serine 160. Aspartate 177 serves as the catalytic Proton acceptor; for phosphorylation activity. Proton donor; for dephosphorylation activity. The important for the catalytic mechanism of both phosphorylation and dephosphorylation stretch occupies residues 201–210; the sequence is LEIRGVGIID. Glutamate 202 serves as a coordination point for Mg(2+). Arginine 243 is an active-site residue. Residues 264-269 form an important for the catalytic mechanism of dephosphorylation region; that stretch reads PVKTGR.

It belongs to the HPrK/P family. Homohexamer. It depends on Mg(2+) as a cofactor.

The catalysed reaction is [HPr protein]-L-serine + ATP = [HPr protein]-O-phospho-L-serine + ADP + H(+). It carries out the reaction [HPr protein]-O-phospho-L-serine + phosphate + H(+) = [HPr protein]-L-serine + diphosphate. Catalyzes the ATP- as well as the pyrophosphate-dependent phosphorylation of a specific serine residue in HPr, a phosphocarrier protein of the phosphoenolpyruvate-dependent sugar phosphotransferase system (PTS). HprK/P also catalyzes the pyrophosphate-producing, inorganic phosphate-dependent dephosphorylation (phosphorolysis) of seryl-phosphorylated HPr (P-Ser-HPr). The two antagonistic activities of HprK/P are regulated by several intracellular metabolites, which change their concentration in response to the absence or presence of rapidly metabolisable carbon sources (glucose, fructose, etc.) in the growth medium. Therefore, by controlling the phosphorylation state of HPr, HPrK/P is a sensor enzyme that plays a major role in the regulation of carbon metabolism and sugar transport: it mediates carbon catabolite repression (CCR), and regulates PTS-catalyzed carbohydrate uptake and inducer exclusion. This is HPr kinase/phosphorylase from Streptococcus gordonii (strain Challis / ATCC 35105 / BCRC 15272 / CH1 / DL1 / V288).